The chain runs to 222 residues: Protein-L-isoaspartate O-methyltransferase (222 aa).

Ser-69 is an active-site residue.

This sequence belongs to the methyltransferase superfamily. L-isoaspartyl/D-aspartyl protein methyltransferase family.

It localises to the cytoplasm. The catalysed reaction is [protein]-L-isoaspartate + S-adenosyl-L-methionine = [protein]-L-isoaspartate alpha-methyl ester + S-adenosyl-L-homocysteine. Functionally, catalyzes the methyl esterification of L-isoaspartyl residues in peptides and proteins that result from spontaneous decomposition of normal L-aspartyl and L-asparaginyl residues. It plays a role in the repair and/or degradation of damaged proteins. The polypeptide is Protein-L-isoaspartate O-methyltransferase (Nitrosomonas europaea (strain ATCC 19718 / CIP 103999 / KCTC 2705 / NBRC 14298)).